Consider the following 230-residue polypeptide: Type 4 apparatus protein DotY (230 aa).

The interval 202-230 (EPKALETKREEIRQEIESGAEAPTTQSIR) is disordered. Residues 204-217 (KALETKREEIRQEI) are compositionally biased toward basic and acidic residues.

The T4BSS is a complex nanomachine composed of several subcomplexes. This subunit is part of the Type IV Coupling Complex (T4CC), a subcomplex composed of the DotLMNYZ core and the IcmSW-LvgA adapter subunits, linked by the C-terminal tail of DotL. Six DotLMNYZ hetero-pentameric units may assemble into a hexameric nanomachine, forming an inner membrane channel for effectors to pass through. Interacts exclusively with DotZ. DotY and DotZ are co-dependent for the assembly into the T4CC.

The protein resides in the cytoplasm. Component of the Dot/Icm type IVB secretion system (T4BSS), which is used to inject bacterial effector proteins into eukaryotic host cells. Part of a subcomplex which recruits effector proteins and delivers them to the core transmembrane subcomplex. DotY and DotZ play a role in effector translocation, but are not essential and do not influence the stability of the subcomplex main components. The DotY/DotZ main function is to optimize secretion by modulating the delivery trajectory of the IcmSW module and the localization of the machinery to the poles. In Legionella pneumophila subsp. pneumophila (strain Philadelphia 1 / ATCC 33152 / DSM 7513), this protein is Type 4 apparatus protein DotY.